The sequence spans 137 residues: Holo-[acyl-carrier-protein] synthase (137 aa).

Residues Asp8 and Glu58 each coordinate Mg(2+).

Belongs to the P-Pant transferase superfamily. AcpS family. It depends on Mg(2+) as a cofactor.

It is found in the cytoplasm. The enzyme catalyses apo-[ACP] + CoA = holo-[ACP] + adenosine 3',5'-bisphosphate + H(+). Transfers the 4'-phosphopantetheine moiety from coenzyme A to a Ser of acyl-carrier-protein. The protein is Holo-[acyl-carrier-protein] synthase of Lactobacillus delbrueckii subsp. bulgaricus (strain ATCC 11842 / DSM 20081 / BCRC 10696 / JCM 1002 / NBRC 13953 / NCIMB 11778 / NCTC 12712 / WDCM 00102 / Lb 14).